We begin with the raw amino-acid sequence, 569 residues long: CTP synthase (569 aa).

The segment at 1 to 276 is amidoligase domain; the sequence is MNQATPTKHV…DAYLVRRLDL (276 aa). S18 provides a ligand contact to CTP. S18 serves as a coordination point for UTP. ATP contacts are provided by residues 19–24 and D76; that span reads SLGKGL. Positions 76 and 150 each coordinate Mg(2+). CTP-binding positions include 157-159, 197-202, and K233; these read DIE and KTKPTQ. Residues 197–202 and K233 contribute to the UTP site; that span reads KTKPTQ. The region spanning 301-550 is the Glutamine amidotransferase type-1 domain; the sequence is TVALVGKYVD…VGAAIERQRE (250 aa). G364 contributes to the L-glutamine binding site. Catalysis depends on C391, which acts as the Nucleophile; for glutamine hydrolysis. L-glutamine-binding positions include 392–395, E415, and R476; that span reads LGLQ. Catalysis depends on residues H523 and E525.

The protein belongs to the CTP synthase family. As to quaternary structure, homotetramer.

It catalyses the reaction UTP + L-glutamine + ATP + H2O = CTP + L-glutamate + ADP + phosphate + 2 H(+). The catalysed reaction is L-glutamine + H2O = L-glutamate + NH4(+). The enzyme catalyses UTP + NH4(+) + ATP = CTP + ADP + phosphate + 2 H(+). The protein operates within pyrimidine metabolism; CTP biosynthesis via de novo pathway; CTP from UDP: step 2/2. Allosterically activated by GTP, when glutamine is the substrate; GTP has no effect on the reaction when ammonia is the substrate. The allosteric effector GTP functions by stabilizing the protein conformation that binds the tetrahedral intermediate(s) formed during glutamine hydrolysis. Inhibited by the product CTP, via allosteric rather than competitive inhibition. In terms of biological role, catalyzes the ATP-dependent amination of UTP to CTP with either L-glutamine or ammonia as the source of nitrogen. Regulates intracellular CTP levels through interactions with the four ribonucleotide triphosphates. The chain is CTP synthase from Nocardioides sp. (strain ATCC BAA-499 / JS614).